We begin with the raw amino-acid sequence, 577 residues long: E3 ubiquitin-protein ligase MSL2 (577 aa).

Residues 1-116 (MNPVNATALY…CEYITQTTLA (116 aa)) are sufficient for interaction with MSL1. Residues Cys44, Cys47, Cys62, His64, Cys67, Cys70, Cys81, and Cys84 each coordinate Zn(2+). The RING-type zinc finger occupies 44–85 (CCVCGHLLQDPIAPTNSTCQHYVCKTCKGKKMMMKPSCSWCK). Lys375 participates in a covalent cross-link: Glycyl lysine isopeptide (Lys-Gly) (interchain with G-Cter in SUMO2). Residues 405-427 (TKSMKKSHEHGSKKSHSKTKPGI) are disordered. Over residues 407 to 423 (SMKKSHEHGSKKSHSKT) the composition is skewed to basic residues. Ser447 is modified (phosphoserine). The CXC MSL2-type domain occupies 457-508 (QEKKGCKCGRATQNPSVLTCRGQRCPCYSNRKACLDCICRGCQNSYMANGEK). Residues Cys462, Cys464, Cys476, Cys481, Cys483, Cys490, Cys493, Cys495, and Cys498 each coordinate Zn(2+).

This sequence belongs to the MSL2 family. As to quaternary structure, component of a multisubunit histone acetyltransferase complex (MSL) at least composed of the KAT8/MOF/MYST1, MSL1/hampin, MSL2 and MSL3. Forms a MSL heterotetrameric core with MSL1.

It localises to the nucleus. It is found in the chromosome. The catalysed reaction is S-ubiquitinyl-[E2 ubiquitin-conjugating enzyme]-L-cysteine + [acceptor protein]-L-lysine = [E2 ubiquitin-conjugating enzyme]-L-cysteine + N(6)-ubiquitinyl-[acceptor protein]-L-lysine.. Its pathway is protein modification; protein ubiquitination. Functionally, non-catalytic component of the MSL histone acetyltransferase complex, a multiprotein complex that mediates the majority of histone H4 acetylation at 'Lys-16' (H4K16ac), an epigenetic mark that prevents chromatin compaction. The MSL complex is required for chromosome stability and genome integrity by maintaining homeostatic levels of H4K16ac. The MSL complex is also involved in gene dosage by promoting up-regulation of genes expressed by the X chromosome. X up-regulation is required to compensate for autosomal biallelic expression. The MSL complex also participates in gene dosage compensation by promoting expression of Tsix non-coding RNA. MSL2 plays a key role in gene dosage by ensuring biallelic expression of a subset of dosage-sensitive genes, including many haploinsufficient genes. Acts by promoting promoter-enhancer contacts, thereby preventing DNA methylation of one allele and creating a methylation-free environment for methylation-sensitive transcription factors such as SP1, KANSL1 and KANSL3. Also acts as an E3 ubiquitin ligase that promotes monoubiquitination of histone H2B at 'Lys-35' (H2BK34Ub), but not that of H2A. This activity is greatly enhanced by heterodimerization with MSL1. H2B ubiquitination in turn stimulates histone H3 methylation at 'Lys-4' (H3K4me) and 'Lys-79' (H3K79me) and leads to gene activation, including that of HOXA9 and MEIS1. Also involved in the DNA damage response by mediating ubiquitination of TP53/p53 and TP53BP1. This chain is E3 ubiquitin-protein ligase MSL2, found in Homo sapiens (Human).